The sequence spans 89 residues: Large ribosomal subunit protein uL24 (89 aa).

It belongs to the universal ribosomal protein uL24 family. In terms of assembly, part of the 50S ribosomal subunit.

Its function is as follows. One of two assembly initiator proteins, it binds directly to the 5'-end of the 23S rRNA, where it nucleates assembly of the 50S subunit. One of the proteins that surrounds the polypeptide exit tunnel on the outside of the subunit. This is Large ribosomal subunit protein uL24 from Chlorobium chlorochromatii (strain CaD3).